A 1120-amino-acid polypeptide reads, in one-letter code: Probable leucine-rich repeat receptor-like protein kinase At1g35710 (1120 aa).

A signal peptide spans 1–29 (MGFAEKNLYDFRFLLFISIILSCSISASA). Over 30 to 783 (TIAEANALLK…RELKKPKKNG (754 aa)) the chain is Extracellular. N-linked (GlcNAc...) asparagine glycans are attached at residues N46, N60, N83, and N124. LRR repeat units lie at residues 78–100 (SIEE…PFIS), 103–125 (NLAY…FGNL), 127–150 (KLIY…GNLK), 151–172 (NLTV…ELGN), 175–198 (SMTD…GNLK), 199–221 (NLMV…LGNM), 223–246 (SMTD…GNLK), 247–269 (NLMV…IGNM), 271–294 (SMTN…GNLK), 295–317 (NLTL…LGNI), 319–342 (SMID…GNLK), 343–365 (NLTI…LGNM), 367–389 (SMID…FGNL), 391–412 (NLTY…ELGN), 415–437 (SMIN…FGNF), 439–461 (KLES…VANS), 463–484 (HLTT…TVCK), 487–510 (KLQN…RDCK), 535–557 (DLNF…WEKS), 559–581 (KLGA…IWNM), 583–605 (QLVE…IGNL), 607–630 (NLSR…SFLT), 631–652 (NLES…TFDS), 655–677 (KLHD…SKLT), 678–701 (QLTQ…SSLQ), 702–723 (SLDK…TFEG), and 726–748 (ALTN…PTFR). N-linked (GlcNAc...) asparagine glycosylation occurs at N151. N295 is a glycosylation site (N-linked (GlcNAc...) asparagine). N-linked (GlcNAc...) asparagine glycosylation occurs at N343. 5 N-linked (GlcNAc...) asparagine glycosylation sites follow: N391, N436, N460, N473, and N490. N569, N580, N604, N607, N641, and N660 each carry an N-linked (GlcNAc...) asparagine glycan. A glycan (N-linked (GlcNAc...) asparagine) is linked at N712. Residues 784 to 804 (NLVVWILVPILGVLVILSICA) form a helical membrane-spanning segment. Over 805–1120 (NTFTYCIRKR…TMLSISTTFS (316 aa)) the chain is Cytoplasmic. Position 848 is a phosphothreonine (T848). The Protein kinase domain maps to 851–1120 (FDPTHLIGTG…TMLSISTTFS (270 aa)). ATP-binding positions include 857-865 (IGTGGYSKV) and K878. Residues Y929 and Y968 each carry the phosphotyrosine modification. The active-site Proton acceptor is the D981. Position 1014 is a phosphoserine (S1014). A phosphotyrosine mark is found at Y1022 and Y1029. T1030 carries the phosphothreonine modification.

The protein belongs to the protein kinase superfamily. Ser/Thr protein kinase family.

It is found in the membrane. It carries out the reaction L-seryl-[protein] + ATP = O-phospho-L-seryl-[protein] + ADP + H(+). The catalysed reaction is L-threonyl-[protein] + ATP = O-phospho-L-threonyl-[protein] + ADP + H(+). This Arabidopsis thaliana (Mouse-ear cress) protein is Probable leucine-rich repeat receptor-like protein kinase At1g35710.